We begin with the raw amino-acid sequence, 116 residues long: Helper of Tim protein 13 (116 aa).

The CHY-type; degenerate zinc finger occupies 10 to 94 (TVDDQSRCVH…SNLICPNCRS (85 aa)). Residues cysteine 17, histidine 19, cysteine 40, cysteine 43, cysteine 68, cysteine 71, cysteine 89, and cysteine 92 each contribute to the Zn(2+) site.

In terms of assembly, interacts with the small Tim proteins TIM8, TIM9, TIM10, TIM12, and TIM13.

It localises to the mitochondrion intermembrane space. The protein resides in the mitochondrion membrane. Required for the assembly or recycling of the small Tim proteins in the mitochondrial intermembrane, thereby participating in the import and insertion of multi-pass transmembrane proteins into the mitochondrial inner membrane. Probably acts by facilitating the formation of disulfide bonds in small Tim proteins. This Saccharomyces cerevisiae (strain ATCC 204508 / S288c) (Baker's yeast) protein is Helper of Tim protein 13 (HOT13).